Consider the following 67-residue polypeptide: Bowman-Birk type proteinase inhibitor A4 (67 aa).

Disulfide bonds link cysteine 10–cysteine 29, cysteine 16–cysteine 27, cysteine 36–cysteine 43, and cysteine 40–cysteine 57.

Belongs to the Bowman-Birk serine protease inhibitor family. In terms of tissue distribution, expressed in bulb (at protein level).

Functionally, serine protease inhibitor. Inhibits trypsin (Ki=12nM) and weakly inhibits chymotrypsin with (Ki=460nm). Does not inhibit bacterial subtilisin. In Hyacinthus orientalis (Common hyacinth), this protein is Bowman-Birk type proteinase inhibitor A4.